A 345-amino-acid polypeptide reads, in one-letter code: NADH-quinone oxidoreductase subunit H (345 aa).

The Lumenal portion of the chain corresponds to 1 to 15; the sequence is MADFWATSLGQTLIL. A helical membrane pass occupies residues 16–35; sequence LAQGLGIIAFVMIGLLLLVW. The Cytoplasmic portion of the chain corresponds to 36–86; that stretch reads GDRKIWAAVQMRKGPNVVGAFGLLQSVADAAKYVFKEIVVPAGVDKPVYFL. Residues 87–106 form a helical membrane-spanning segment; it reads APMLSLVLALLAWVVVPFNE. Residues 107-110 are Lumenal-facing; it reads GWVM. A helical transmembrane segment spans residues 111 to 130; it reads ADINVAVLFVFAVSSLEVYG. Residues 131 to 156 are Cytoplasmic-facing; that stretch reads VIMGGWASNSKYPFLGSLRSAAQMIS. Residues 157 to 176 traverse the membrane as a helical segment; sequence YEVSMGLIIVGVIISTGSMN. The Lumenal segment spans residues 177-191; sequence LSAIVEAQRGDFGLL. Residues 192–211 traverse the membrane as a helical segment; the sequence is NWYWLPHLPMVALFFISALA. Residues 212–245 lie on the Cytoplasmic side of the membrane; it reads ETNRPPFDLPEAESELVAGFMVEYSSTPYLLFMA. The chain crosses the membrane as a helical span at residues 246-265; that stretch reads GEYIAVWLMCALTSVLFFGG. The Lumenal portion of the chain corresponds to 266–276; that stretch reads WLSPIPGVPDG. Residues 277–296 traverse the membrane as a helical segment; that stretch reads VLWMVAKMAAVFFVFAMVKA. Residues 297–313 are Cytoplasmic-facing; the sequence is IVPRYRYDQLMRIGWKV. Residues 314 to 333 form a helical membrane-spanning segment; the sequence is FLPLSLAWVVVVAFLAKFEV. Topologically, residues 334–345 are lumenal; that stretch reads LGGFWARWSIGA.

This sequence belongs to the complex I subunit 1 family. NDH-1 is composed of 14 different subunits. Subunits NuoA, H, J, K, L, M, N constitute the membrane sector of the complex.

The protein localises to the cellular chromatophore membrane. The enzyme catalyses a quinone + NADH + 5 H(+)(in) = a quinol + NAD(+) + 4 H(+)(out). In terms of biological role, NDH-1 shuttles electrons from NADH, via FMN and iron-sulfur (Fe-S) centers, to quinones in the respiratory chain. The immediate electron acceptor for the enzyme in this species is believed to be ubiquinone. Couples the redox reaction to proton translocation (for every two electrons transferred, four hydrogen ions are translocated across the cytoplasmic membrane), and thus conserves the redox energy in a proton gradient. This subunit may bind ubiquinone. In Rhodobacter capsulatus (Rhodopseudomonas capsulata), this protein is NADH-quinone oxidoreductase subunit H.